Here is a 163-residue protein sequence, read N- to C-terminus: MPSFDIVSEVDLQEARNAVDNATREVESRFDFRGVEATFELNDANKTIKVLSESDFQVNQLLDILRAKLLKRGIEGSSLDVPEAFVHSGKTWFVEAKLKQGIESAVQKKIVKLIKDSKLKVQAQIQGEEIRVTGKSRDDLQSVMALVRGGDLGQPFQFKNFRD.

It belongs to the YajQ family.

Nucleotide-binding protein. This chain is Nucleotide-binding protein CKO_02735, found in Citrobacter koseri (strain ATCC BAA-895 / CDC 4225-83 / SGSC4696).